The primary structure comprises 167 residues: Phospholipase A2 (167 aa).

Residues W38, G40, and G42 each contribute to the Ca(2+) site. 5 disulfides stabilise this stretch: C39–C61, C60–C99, C67–C92, C90–C127, and C132–C144. N47 carries N-linked (GlcNAc...) asparagine glycosylation. H64 is a catalytic residue. A Ca(2+)-binding site is contributed by D65. Positions 136–140 (ARSAR) are excised as a propeptide.

This sequence belongs to the phospholipase A2 family. Group III subfamily. In terms of assembly, heterodimer composed of a large subunit and a small subunit; disulfide-linked. Requires Ca(2+) as cofactor. As to expression, expressed by the venom gland.

It localises to the secreted. It carries out the reaction a 1,2-diacyl-sn-glycero-3-phosphocholine + H2O = a 1-acyl-sn-glycero-3-phosphocholine + a fatty acid + H(+). Functionally, phospholipase toxin, which catalyzes the calcium-dependent hydrolysis of the 2-acyl groups in 3-sn-phosphoglycerides. Inhibits both skeletal (RYR1) and cardiac (RYR2) ryanodine receptors (calcium release channels). Probably blocks ryanodine receptors by generating a lipid product. Shows hemolytic activity, but it is not know if it is direct or indirect. The sequence is that of Phospholipase A2 from Hottentotta tamulus (Eastern Indian scorpion).